Reading from the N-terminus, the 491-residue chain is Fibrinogen beta chain (491 aa).

Positions 1–30 (MKRMVSWSFHKLKTMKHLLLLLLCVFLVKS) are cleaved as a signal peptide. The residue at position 31 (Gln31) is a Pyrrolidone carboxylic acid. The interval 44–75 (RGHRPLDKKREEAPSLRPAPPPISGGGYRARP) is disordered. The tract at residues 45–47 (GHR) is beta-chain polymerization, binding distal domain of another fibrin. Over residues 47 to 57 (RPLDKKREEAP) the composition is skewed to basic and acidic residues. Residues 157-222 (KRQKQVKDNE…ESDVSAQMEY (66 aa)) adopt a coiled-coil conformation. Intrachain disulfides connect Cys231–Cys316 and Cys241–Cys270. The Fibrinogen C-terminal domain maps to 232–488 (NIPVVSGKEC…KMSMKIRPFF (257 aa)). Residue Asn394 is glycosylated (N-linked (GlcNAc...) asparagine). An intrachain disulfide couples Cys424 to Cys437.

In terms of assembly, heterohexamer; disulfide linked. Contains 2 sets of 3 non-identical chains (alpha, beta and gamma). The 2 heterotrimers are in head to head conformation with the N-termini in a small central domain. Post-translationally, conversion of fibrinogen to fibrin is triggered by thrombin, which cleaves fibrinopeptides A and B from alpha and beta chains, and thus exposes the N-terminal polymerization sites responsible for the formation of the soft clot. The soft clot is converted into the hard clot by factor XIIIA which catalyzes the epsilon-(gamma-glutamyl)lysine cross-linking between gamma chains (stronger) and between alpha chains (weaker) of different monomers. Detected in blood plasma (at protein level).

It is found in the secreted. In terms of biological role, cleaved by the protease thrombin to yield monomers which, together with fibrinogen alpha (FGA) and fibrinogen gamma (FGG), polymerize to form an insoluble fibrin matrix. Fibrin has a major function in hemostasis as one of the primary components of blood clots. In addition, functions during the early stages of wound repair to stabilize the lesion and guide cell migration during re-epithelialization. Was originally thought to be essential for platelet aggregation, based on in vitro studies using anticoagulated blood. However subsequent studies have shown that it is not absolutely required for thrombus formation in vivo. Enhances expression of SELP in activated platelets. Maternal fibrinogen is essential for successful pregnancy. Fibrin deposition is also associated with infection, where it protects against IFNG-mediated hemorrhage. May also facilitate the antibacterial immune response via both innate and T-cell mediated pathways. This is Fibrinogen beta chain (FGB) from Homo sapiens (Human).